The following is a 308-amino-acid chain: Homeobox-leucine zipper protein HOX2 (308 aa).

2 disordered regions span residues 15–36 (QGSL…SSPW) and 71–117 (QGRA…RKKL). Residues 74 to 88 (ASTSPDSAAALSSAS) show a composition bias toward low complexity. Positions 112-171 (GGRKKLRLSKDQAAVLEECFKTHSTLNPKQKVALANRLGLRPRQVEVWFQNRRARTKLKQ) form a DNA-binding region, homeobox. Residues 170 to 214 (KQTEVDCEYLKRWCERLADENKRLEKELADLRALKAAPSPASASA) are leucine-zipper.

It belongs to the HD-ZIP homeobox family. Class II subfamily. As to quaternary structure, homodimer. May form a heterodimer with HOX1, HOX3 or HOX7. Expressed in seedlings, roots, leaves, nodes, internodes, flowers and embryo.

It is found in the nucleus. In terms of biological role, probable transcription factor that binds to the DNA sequence 5'-CAAT[GC]ATTG-3'. The chain is Homeobox-leucine zipper protein HOX2 (HOX2) from Oryza sativa subsp. indica (Rice).